Consider the following 357-residue polypeptide: Pheromone receptor 1 (357 aa).

Transmembrane regions (helical) follow at residues 5 to 25, 32 to 52, 67 to 90, 110 to 130, 145 to 165, 206 to 226, and 268 to 288; these read ITPF…AWHI, LIML…NSMV, LSVR…ARKL, VIID…LMIV, WPMM…VIVV, LLLL…GTIA, and LILA…MFGL. The interval 338–357 is disordered; the sequence is ANTSTKSEKSDIDMRGSEAA. The span at 343-357 shows a compositional bias: basic and acidic residues; it reads KSEKSDIDMRGSEAA.

The protein belongs to the G-protein coupled receptor 4 family.

The protein resides in the membrane. Receptor for the A2 pheromone, a prenylated mating factor. The protein is Pheromone receptor 1 (PRA1) of Mycosarcoma maydis (Corn smut fungus).